A 681-amino-acid polypeptide reads, in one-letter code: UvrABC system protein B (681 aa).

Positions 32–419 (ARLSRGERDV…GGEYVEQVIR (388 aa)) constitute a Helicase ATP-binding domain. An ATP-binding site is contributed by 45 to 52 (GATGTGKS). A Beta-hairpin motif is present at residues 98–121 (YYDYYQPEAYIAQTDTYIEKDSSI). The region spanning 436–602 (QIDDLIHEIK…PLRKKIADIL (167 aa)) is the Helicase C-terminal domain. Positions 607–616 (ESKAESTAPS) are enriched in polar residues. The segment at 607–626 (ESKAESTAPSSDAVVVSKTN) is disordered. Positions 636–671 (RSLIDDLTTQMGTAARELKFELAGRLRDEIAELKKE) constitute a UVR domain.

Belongs to the UvrB family. Forms a heterotetramer with UvrA during the search for lesions. Interacts with UvrC in an incision complex.

It localises to the cytoplasm. The UvrABC repair system catalyzes the recognition and processing of DNA lesions. A damage recognition complex composed of 2 UvrA and 2 UvrB subunits scans DNA for abnormalities. Upon binding of the UvrA(2)B(2) complex to a putative damaged site, the DNA wraps around one UvrB monomer. DNA wrap is dependent on ATP binding by UvrB and probably causes local melting of the DNA helix, facilitating insertion of UvrB beta-hairpin between the DNA strands. Then UvrB probes one DNA strand for the presence of a lesion. If a lesion is found the UvrA subunits dissociate and the UvrB-DNA preincision complex is formed. This complex is subsequently bound by UvrC and the second UvrB is released. If no lesion is found, the DNA wraps around the other UvrB subunit that will check the other stand for damage. In Corynebacterium diphtheriae (strain ATCC 700971 / NCTC 13129 / Biotype gravis), this protein is UvrABC system protein B.